Reading from the N-terminus, the 125-residue chain is Aspartate 1-decarboxylase 2 (125 aa).

The active-site Schiff-base intermediate with substrate; via pyruvic acid is Ser25. Ser25 carries the pyruvic acid (Ser) modification. Thr57 is a substrate binding site. The Proton donor role is filled by Tyr58. 73 to 75 (GAA) contributes to the substrate binding site.

This sequence belongs to the PanD family. In terms of assembly, heterooctamer of four alpha and four beta subunits. It depends on pyruvate as a cofactor. Post-translationally, is synthesized initially as an inactive proenzyme, which is activated by self-cleavage at a specific serine bond to produce a beta-subunit with a hydroxyl group at its C-terminus and an alpha-subunit with a pyruvoyl group at its N-terminus.

The protein resides in the cytoplasm. The catalysed reaction is L-aspartate + H(+) = beta-alanine + CO2. The protein operates within cofactor biosynthesis; (R)-pantothenate biosynthesis; beta-alanine from L-aspartate: step 1/1. Functionally, catalyzes the pyruvoyl-dependent decarboxylation of aspartate to produce beta-alanine. In Gloeobacter violaceus (strain ATCC 29082 / PCC 7421), this protein is Aspartate 1-decarboxylase 2.